Consider the following 327-residue polypeptide: Transcription factor bHLH71 (327 aa).

2 disordered regions span residues 46–88 (ISEI…NQRM) and 151–176 (AKLN…HQPS). The segment covering 65–76 (RGKKRRRRKPRV) has biased composition (basic residues). Residues 77–88 (CKNEEEAENQRM) are compositionally biased toward basic and acidic residues. The 52-residue stretch at 85–136 (NQRMTHIAVERNRRRQMNQHLSVLRSLMPQPFAHKGDQASIVGGAIDFIKEL) folds into the bHLH domain. Positions 152–169 (KLNQSVTSSTSQDSNGEQ) are enriched in polar residues.

Homodimer. Interacts with FAMA. Expressed in leaves, stems, and flowers.

It localises to the nucleus. Functionally, transcription factor. May be involved in the differentiation of stomatal guard cells. This is Transcription factor bHLH71 (BHLH71) from Arabidopsis thaliana (Mouse-ear cress).